We begin with the raw amino-acid sequence, 273 residues long: Protein BRANCHLESS TRICHOME (273 aa).

The span at 1–12 (MKDMKMQSSPET) shows a compositional bias: polar residues. The tract at residues 1–30 (MKDMKMQSSPETMMTRIPTPDPHSTGVRED) is disordered. The stretch at 69–199 (IKVFMESELG…GERERNRMMK (131 aa)) forms a coiled coil.

Interacts with STI.

Functionally, acts as a key regulator of trichome branching. Could participate with STI in the same pathway. Also plays a role in integrating endoreplication levels with cell shape. In Arabidopsis thaliana (Mouse-ear cress), this protein is Protein BRANCHLESS TRICHOME (BLT).